A 116-amino-acid polypeptide reads, in one-letter code: Protein Rev (116 aa).

Phosphoserine; by host CK2 is present on residues serine 5 and serine 8. The segment at leucine 18–asparagine 26 is homomultimerization. The tract at residues tyrosine 23–glutamine 49 is disordered. A Nuclear localization signal and RNA-binding (RRE) motif is present at residues threonine 34–arginine 50. Positions glutamine 36–glutamate 47 are enriched in basic residues. Positions leucine 73–aspartate 84 match the Nuclear export signal and binding to XPO1 motif. A phosphoserine; by host mark is found at serine 92 and serine 99. A disordered region spans residues serine 92–glutamate 116.

The protein belongs to the HIV-1 REV protein family. As to quaternary structure, homomultimer; when bound to the RRE. Multimeric assembly is essential for activity and may involve XPO1. Binds to human KPNB1, XPO1, TNPO1, RANBP5 and IPO7. Interacts with the viral Integrase. Interacts with human KHDRBS1. Interacts with human NAP1; this interaction decreases Rev multimerization and stimulates its activity. Interacts with human DEAD-box helicases DDX3 and DDX24; these interactions may serve for viral RNA export to the cytoplasm and packaging, respectively. Interacts with human PSIP1; this interaction may inhibit HIV-1 DNA integration by promoting dissociation of the Integrase-LEDGF/p75 complex. In terms of processing, asymmetrically arginine dimethylated at one site by host PRMT6. Methylation impairs the RNA-binding activity and export of viral RNA from the nucleus to the cytoplasm. Phosphorylated by protein kinase CK2. Presence of, and maybe binding to the N-terminus of the regulatory beta subunit of CK2 is necessary for CK2-mediated Rev's phosphorylation.

The protein localises to the host nucleus. It is found in the host nucleolus. It localises to the host cytoplasm. In terms of biological role, escorts unspliced or incompletely spliced viral pre-mRNAs (late transcripts) out of the nucleus of infected cells. These pre-mRNAs carry a recognition sequence called Rev responsive element (RRE) located in the env gene, that is not present in fully spliced viral mRNAs (early transcripts). This function is essential since most viral proteins are translated from unspliced or partially spliced pre-mRNAs which cannot exit the nucleus by the pathway used by fully processed cellular mRNAs. Rev itself is translated from a fully spliced mRNA that readily exits the nucleus. Rev's nuclear localization signal (NLS) binds directly to KPNB1/Importin beta-1 without previous binding to KPNA1/Importin alpha-1. KPNB1 binds to the GDP bound form of RAN (Ran-GDP) and targets Rev to the nucleus. In the nucleus, the conversion from Ran-GDP to Ran-GTP dissociates Rev from KPNB1 and allows Rev's binding to the RRE in viral pre-mRNAs. Rev multimerization on the RRE via cooperative assembly exposes its nuclear export signal (NES) to the surface. Rev can then form a complex with XPO1/CRM1 and Ran-GTP, leading to nuclear export of the complex. Conversion from Ran-GTP to Ran-GDP mediates dissociation of the Rev/RRE/XPO1/RAN complex, so that Rev can return to the nucleus for a subsequent round of export. Beside KPNB1, also seems to interact with TNPO1/Transportin-1, RANBP5/IPO5 and IPO7/RANBP7 for nuclear import. The nucleoporin-like HRB/RIP is an essential cofactor that probably indirectly interacts with Rev to release HIV RNAs from the perinuclear region to the cytoplasm. This Human immunodeficiency virus type 1 group M subtype B (isolate BRU/LAI) (HIV-1) protein is Protein Rev.